Consider the following 416-residue polypeptide: Keratin, type I cuticular Ha1 (416 aa).

The interval 2–56 (PYNCCLPALSCRTSCSSRPCVPPSCHGCTLPGACNIPANVGNCNWFCEGSFNGNE) is head. The IF rod domain occupies 56-367 (EKETMQFLND…GLLESEDCKL (312 aa)). Residues 57–91 (KETMQFLNDRLASYMEKVRQLERENAELECRIQER) form a coil 1A region. Residues 92–102 (NQQQDPLVCPA) form a linker 1 region. Residues 103 to 203 (YQAYFRTIEE…HEEEVNTLRC (101 aa)) are coil 1B. Residues 204 to 219 (QLGDRLNVEVDAAPTV) are linker 12. The interval 220 to 363 (DLNRVLNETR…NTYRGLLESE (144 aa)) is coil 2. The segment at 364–416 (DCKLPCNPCATSNACGKPIGPCVSNPCVPCPPPAPCTPCVPRPRCGPCNSFVR) is tail.

It belongs to the intermediate filament family.

The polypeptide is Keratin, type I cuticular Ha1 (Krt31) (Mus musculus (Mouse)).